Consider the following 269-residue polypeptide: 3-ketodihydrosphingosine reductase (269 aa).

The NADPH site is built by glycine 10, serine 12, serine 13, glycine 14, lysine 36, and aspartate 50. The GXSXG motif lies at 10-14; sequence GASSG. Serine 12 functions as the Nucleophile; for lipase activity in the catalytic mechanism. Serine 128 functions as the Proton donor in the catalytic mechanism. Residue tyrosine 142 is the Proton acceptor of the active site. Residues tyrosine 142 and lysine 146 each contribute to the NADP(+) site. Residues 142-146 and 175-177 contribute to the NADPH site; these read YSASK and FNT. Lysine 146 is an active-site residue. Catalysis depends on lysine 146, which acts as the Lowers pKa of active site Tyr.

Belongs to the short-chain dehydrogenases/reductases (SDR) family.

It carries out the reaction sphinganine + NADP(+) = 3-oxosphinganine + NADPH + H(+). It participates in lipid metabolism; sphingolipid metabolism. Catalyzes the reduction of 3'-oxosphinganine (3-ketodihydrosphingosine/KDS) to sphinganine (dihydrosphingosine/DHS), the second step of de novo sphingolipid biosynthesis. The chain is 3-ketodihydrosphingosine reductase from Bacteroides thetaiotaomicron (strain ATCC 29148 / DSM 2079 / JCM 5827 / CCUG 10774 / NCTC 10582 / VPI-5482 / E50).